A 782-amino-acid chain; its full sequence is MGKRDRADRDKKKSRKRHYEDEEDDEEDAPGNDPQEAVPSAAGKQVDESGTKVDEYGAKDYRLQMPLKDDHTSRPLWVAPDGHIFLEAFSPVYKYAQDFLVAIAEPVCRPTHVHEYKLTAYSLYAAVSVGLQTSDITEYLRKLSKTGVPDGIMQFIKLCTVSYGKVKLVLKHNRYFVESSHPDVIQHLLQDPVIRECRLRNSEGEATELITETFTSKSAISKTAEGSGGPSTSRVTDPQGKSDIPMDLFDFYEQMDKDEEEEEETQTVSFEVKQEMIEELQKRCIHLEYPLLAEYDFRNDSVNPDINIDLKPTAVLRPYQEKSLRKMFGNGRARSGVIVLPCGAGKSLVGVTAACTVRKRCLVLGNSAVSVEQWKAQFKMWSTIDDSQICRFTSDAKDKPIGCSVAISTYSMLGHTTKRSWEAERVMEWLKTQEWGLMILDEVHTIPAKMFRRVLTIVQAHCKLGLTATLVREDDKIVDLNFLIGPKLYEANWMELQNNGYIAKVQCAEVWCPMSPEFYREYVAIKTKKRILLYTMNPNKFRACQFLIKFHERRNDKIIVFADNVFALKEYAIRLNKPYIYGPTSQGERMQILQNFKHNPKINTIFISKVGDTSFDLPEANVLIQISSHGGSRRQEAQRLGRVLRAKKGMVAEEYNAFFYSLVSQDTQEMAYSTKRQRFLVDQGYSFKVITKLAGMEEEDLAFSTKEEQQQLLQKVLAATDLDAEEEVVAGEFGSRSSQASRRFGTMSSMSGADDTVYMEYHSSRSKAPSKHVHPLFKRFRK.

The segment covering 1 to 11 has biased composition (basic and acidic residues); the sequence is MGKRDRADRDK. Disordered stretches follow at residues 1–51 and 220–240; these read MGKR…ESGT and ISKT…DPQG. Residues 6-18 carry the Nuclear localization signal motif; it reads RADRDKKKSRKRH. Positions 21-30 are enriched in acidic residues; sequence DEEDDEEDAP. The Helicase ATP-binding domain maps to 327–488; sequence MFGNGRARSG…DLNFLIGPKL (162 aa). 340–347 contacts ATP; sequence LPCGAGKS. A DEVH box motif is present at residues 441–444; it reads DEVH. A Helicase C-terminal domain is found at 542-702; sequence RACQFLIKFH…LAGMEEEDLA (161 aa). Serine 686 carries the post-translational modification Phosphoserine. Residue serine 751 is modified to Phosphoserine; by CK2.

The protein belongs to the helicase family. RAD25/XPB subfamily. In terms of assembly, component of the 7-subunit TFIIH core complex composed of XPB/ERCC3, XPD/ERCC2, GTF2H1, GTF2H2, GTF2H3, GTF2H4 and GTF2H5, which is active in NER. The core complex associates with the 3-subunit CDK-activating kinase (CAK) module composed of CCNH/cyclin H, CDK7 and MNAT1 to form the 10-subunit holoenzyme (holo-TFIIH) active in transcription. Interacts with PUF60. Interacts with ATF7IP. Interacts with KAT2A; leading to KAT2A recruitment to promoters and acetylation of histones. Part of TBP-based Pol II pre-initiation complex (PIC), in which Pol II core assembles with general transcription factors and other specific initiation factors including GTF2E1, GTF2E2, GTF2F1, GTF2F2, TCEA1, ERCC2, ERCC3, GTF2H2, GTF2H3, GTF2H4, GTF2H5, GTF2A1, GTF2A2, GTF2B and TBP; this large multi-subunit PIC complex mediates DNA unwinding and targets Pol II core to the transcription start site where the first phosphodiester bond forms. Post-translationally, phosphorylation on Ser-751 by CK2 controls the 5'-excision activity of ERCC1-XPF endonuclease; phosphorylated protein inhibits the excision activity and thus NER. Dephosphorylation reactivates the 5'-excision step. Phosphorylation has no effect on transcription or the 3'-5' helicase activity.

It localises to the nucleus. The catalysed reaction is Couples ATP hydrolysis with the unwinding of duplex DNA by translocating in the 3'-5' direction.. It carries out the reaction ATP + H2O = ADP + phosphate + H(+). Its activity is regulated as follows. Phosphorylation on Ser-751 by CK2 controls the 5'-excision activity of ERCC1-XPF endonuclease; phosphorylated protein inhibits the excision activity and thus NER. ATPase activity is stimulated by TFIIH subunit p52 (GTF2H4). DNA translocase activity by this subunit in TFIIH is stimulated by XPA, ERCC5/XPG and XFP plus ERCC1. Functionally, ATP-dependent 3'-5' DNA helicase/translocase; binds dsDNA rather than ssDNA, unzipping it in a translocase rather than classical helicase activity. Component of the general transcription and DNA repair factor IIH (TFIIH) core complex. When complexed to CDK-activating kinase (CAK), involved in RNA transcription by RNA polymerase II. The ATPase activity of XPB/ERCC3, but not its helicase activity, is required for DNA opening; it may wrap around the damaged DNA wedging it open, causing localized melting and twisting that allows XPD/ERCC2 helicase to anchor. The ATP-dependent helicase activity of XPB/ERCC3 may be required for promoter escape. Also involved in transcription-coupled nucleotide excision repair (NER) of damaged DNA. In NER, TFIIH acts by opening DNA around the lesion to allow the excision of the damaged oligonucleotide and its replacement by a new DNA fragment. The structure of the TFIIH transcription complex differs from the NER-TFIIH complex; large movements by XPD/ERCC2 and XPB/ERCC3 are stabilized by XPA. In Macaca fascicularis (Crab-eating macaque), this protein is General transcription and DNA repair factor IIH helicase/translocase subunit XPB (ERCC3).